The primary structure comprises 142 residues: Large ribosomal subunit protein uL13 (142 aa).

Belongs to the universal ribosomal protein uL13 family. Part of the 50S ribosomal subunit.

This protein is one of the early assembly proteins of the 50S ribosomal subunit, although it is not seen to bind rRNA by itself. It is important during the early stages of 50S assembly. The sequence is that of Large ribosomal subunit protein uL13 from Chromohalobacter salexigens (strain ATCC BAA-138 / DSM 3043 / CIP 106854 / NCIMB 13768 / 1H11).